Here is a 232-residue protein sequence, read N- to C-terminus: Ubiquinone biosynthesis O-methyltransferase (232 aa).

Positions 36, 55, 76, and 120 each coordinate S-adenosyl-L-methionine.

The protein belongs to the methyltransferase superfamily. UbiG/COQ3 family.

It catalyses the reaction a 3-demethylubiquinol + S-adenosyl-L-methionine = a ubiquinol + S-adenosyl-L-homocysteine + H(+). The catalysed reaction is a 3-(all-trans-polyprenyl)benzene-1,2-diol + S-adenosyl-L-methionine = a 2-methoxy-6-(all-trans-polyprenyl)phenol + S-adenosyl-L-homocysteine + H(+). The protein operates within cofactor biosynthesis; ubiquinone biosynthesis. In terms of biological role, O-methyltransferase that catalyzes the 2 O-methylation steps in the ubiquinone biosynthetic pathway. The polypeptide is Ubiquinone biosynthesis O-methyltransferase (Burkholderia vietnamiensis (strain G4 / LMG 22486) (Burkholderia cepacia (strain R1808))).